We begin with the raw amino-acid sequence, 4218 residues long: MDAVADIVFVSRDYQAQSLATDEISVSRGDLVELISSKASEKSRCFVRMFDSGDSPKEGWVPIDILEFNPTMSSSNGKESGDAEFRKLTILRELVETEEEFSRDLLHVVEKYIKGIDKPVVPRSVRDNKDIIFCNFLQIAEFHNNVLKEGLKCYSNQPNMVAKTFLRLERDFDKHVVYCQNEPLAQDYLGSSPDAKKYFQELSKQLGDDKSLAEHLKLPIQRINDYQLLFKDFIKYSLSLKENVKDLERALELMLSVPSRAYDNRFLSSIEGCRGNIYKLGRLLLHAWCNVVDKEGKAHDRYCFLFKSRILVTKVRKISENRSVFILQNIVKLPLCNIELKADEKQIHLSLKAPEANSFLPIDIKPHGPEAHLTWFNEISSHINQDVTLQEHNADDLKVDASQIASESELILHLPQRAEAHDPNLSVRPSDVAENYFLSKETKERLQHEQQELLKLEQEAIELYKKQQSSKSVSSKTESVEITSSQVKSSSEVRKVVSPPPPPQAQVKEVTPVKVVSSPPPPKEITPAKVATPPPQPQVVTSPVKEVAPPPQPRAVASPAKEVTPSQSEPVKAPSPIKEVRKEVPPSASHSKEVEALVATEIRESLTETRSTVVESGQSSEIREEIVVTEESSLEGKQVVALEREPSPCSIPKIQVYRPVECENPVVTKHKPIELKDIVGYSESLRDGDTAPAGGSPGRQQGYSANITDHASLTIWNNRLANIAGDRSGANQHLQQSGPPPPPIPPNFTRMPGFFQPLPLIAYETTIEILIVKARPPSPPPPPPPTIKRVLVHTESLEQKTQNFFEGIYDAASSDTSLRNAKQKIRSIKSTVLKSKDSTNYAQDTVQKAKARDFLHIFTPPVKKRPIYEIVEEPVNIFELEGDYTESIADDFREPSADFEARGQSVGGMDDYYSGYSRASTRRYETKTRDYDRGTSYDSTVERSQYGISSRRDRSSVDKVEARSSLLATGRTESRAASRAESRAESRASYSVAESRAGIRSSSRLQEDRPLRSVDKPVVVKMLKSVQVEPGETAHFEIQFKDQPGLVTWLKDNKPLEDRLADRITQTAAPMNSYRLDIKNCSETDAGTYTIRAQSASETTTVSAQLAVGQAPGHDETKTNTEPAFLVSLKDAEMIENTLFRFMVKIIGDPKPRVKFYKDEKEILETNDRIQIIRDKDYLGFYELVIADVQKTDAGTYSCKATNKHGEANCEAIATTVEDKNPFGALSGQILPAGEKPVFQWKRNGEEFDPEERFKVLFGEDEDSLALVFQHVKPEDAGIYTCVAQTSTGNISCSAELSVQGAIQTLNREPEKPTLVIEHREANASIGGSAILELQCKGFPKPAVQWKHDGEVIQVDDRHKFMYEDEESMSLVIKNVDTVDAGVYTIEAINELGQDESSINLVVKAPPKIKKITDITCSAGETIKMEIEVEGFPQPTVQVTNNGKDVTAESNVKISSSSIGKSLEKVVVEVKEIKLSQAGNYSIKATNDLSQTSEYWSCTVKSKPVIVKNFESEYIHGEKENVQMTVRIDAYPEAKLTWYHDETEIKITDSKYTVSSDGNAYTLKITGATRVDAGKYTVKATNEHGSATSSTQLLIKCAPEFTHKLKNITVAEGDSNVELVVGVDAYPRPHAKWYIDGIEIDEKRNDFRHVEEGNDFKLIMNQVATNMQGNYTCKIMNDYGKLEDNCVVTVNCKPKVKRGLKNVEVQEGKSFTLEVEVYSEPEAKIKWFKDGHEIYEDARIKISRDTQRIENYYLTLNLARTEDAGTYEMKATNFIGETTSTCKVAVLTSEALSLEQTVTKTLIATTEEPEEGAVPEIVHVDVFQQHSYESVPLKYEVIATGIPKPEAIWYHDGKPITPDKHTAITVDGDHYKLEVQSLDLVDAGEYKVVVQNKVGEKSHQGELSLSGIAEYRKPILTQGPGLKDIKVNKGDKVCEPVVFTADPAPEIVLLKDGQPVVETNNVKLKVDKKDAENGLVQYTCTLNILEAEIKDSGRYELKVKNKYGELVTSGWIDVLAKPEISGLNDTKCLPGDTICFEALVQANPKPKVSWTRGNENLCNHENCEVIADVDADKYRLVFQSVSPCEDGKYTITATNSEGRAAVDFNLAVLVEKPTFIVQPESQSIHDYRPVSTKVLVHGVPLPTIEWFKDDKPINYEAINKPGKDKLYAKEDTKKGTDQIESVLDIKSFRENDVGAYTCVATNEIGVTKAPFKLAMLSLAPSFVKKLDNALDVLQGEPLVLECCVDGSPLPTVQWLKDGDEVKPSESIKISTNPDGLVKLEINSCQPNDSGAYKLIISNPHGEKVALCAVAVKPEEMQPKFLKPITSQTVVVGEPLKLEAQVTGFPAPEVKWYKDGMLLRPSPEINFINSPNGQIGLIIDAAQPLDAGVYKCLIANKGGEIEGVSKVEIVPKESKPVFVAELQDASSIEGFPVKMDIKVVGNPKPKLQWFHNGHEIKPDASHIAIVENPDNSSSLIIEKTAPGDSGLYEVIAQNPEGSTASKAKLYVAPKADETATEEAPQFVSALRDVNADEGQELVLSAPFISNPMPEVIWSKDGVTLTPNERLLMTCDGKHIGLTIKPAEAADSGNYTCLLANPLGEDSSACNANVRKVYKPPVFTQKISDQQQVFGNNAKIPVTVSGVPYPDLEWYFQDKPIPKSEKYSIKNDGDHHMLIVNNCEKGDQGVYKCIASNREGKDITQGRLDIVNEIKKHSRSEPPVFLKKIGDCDIYEGMVAKFTACATGYPEPEVEWFKNDQKLFPSDRFLIDIEPNGLLRLTIKNVTEYDVGRYSCRIFNPYGDDICHAELFYDSLDSQQKPLEDQYTDFKKYKKSGAPPPLSEGPIISRMTDRGLLLSWNPSVPLTPRYPITYQIEMMDLPEGDWRTLRTGVRSCACDIRNLEPFRDYRFRVRVENKFGVSDPSPYTQTYRQKLVPDPPKTYTYLPPGTDFRPETSPYFPKDFDIERPPHDGLAQAPQFLLREQDISYGVKDHNTELMWFVYGYPKPKMTYYFDDMLIESGGRFDQSYTRNGQATLFINKMLDRDVGWYEAVATNEHGEARQRVRLEIAEHPRFLKRPDETFIMARKNGRIEAKLVGIPLPEVHWFKDWKPIVDSSRIKISSYDPDIYVLSIHDSIIKDGGLYSISARNIAGSISTSVTVHIEENEDQYIYKTYGRHPYVRSKQLRYQDKYDIGDELGRGTQGITYHAVERSSGDNYAAKIMYGRPELRPFMLNELEMMNTFNHKNLIRPYDAYDTDRSVTLIMELAAGGELVRDNLLRRDYYTERDIAHYIRQTLWGLEHMHEMGVGHMGLTIKDLLISVVGGDIIKVSDFGLSRKINRHNLSTLDYGMPEFVSPEVVNKEGVNFSHDMWTVGLITYVLLGGHNPFLGIDDRETLTKIREGRWDFKDEIWTHISDDGRDFISRLLLYSPEERMDVKTALKHPWFFMLDRPVYDHDYQIGTDRLRNYYDHFRDWYANASCKNYFRRRRLSGCFQHPSKMVYPPGHVYTPENTPEPLPEPRIRAKREEVVSKYLHPDYELGLIQSESHYQYGPDTYLLQLRDVNFPVRLREYMKVAHRRSPSFALNDSVDWSLPVIRERRRFTDIMDEEIDDERTRSRISMYAANESYSIRRLRTELGPRLDEYTEADAMIETQREGYPPFFREKPQTIAITENQPSHIHCFAVGDPKPCVQWFKNDMVLTESKRIKISVDEDGRSILRFEPALHFDVGVYKVVARNKVGQTVARCRIVVATLPDAPDSPEISANSGTEILLRWKQPRDDGHSTVLCYSLQYKLSNCDAWTTVADNIDHEFYLLHDLQPNTNYQFRLASKNRIGWSEMGIPVSASTVGGDAPKIHITKAMKHLQQLTENGHQVVPEEERVHTDYHCEREPPNWVTDSSVSDKYSFISEIARGEFSTIVKGIQKSTDTVVVAKILEVTDENEDNVVAEFDNFKTLRHERIPALFSAYKPLNVPIAIFVMEKLQGADVLTYFSSRHEYSEQMVATVVTQLLDALQYLHWRGYCHLNIQPDNVVMASVRSIQVKLVDFGSAKKVNKLGMKVTPCGSLDFQPPEMINDEPIFPQSDIWSLGALTYLLLSGCSPFRGADEYETKQNISFVRYRFENLFKEVTPEATRFIMLLFKRHPTKRPYTEDCLEHRWLMSSDYMVRKRERAIFLGSRLKTFCDEYHDLKNASATSSKVLNTVAGGPTPTQLLRSNSIQEELLTTF.

Residues 3–71 form the SH3 domain; sequence AVADIVFVSR…PIDILEFNPT (69 aa). The 179-residue stretch at 86–264 folds into the DH domain; the sequence is RKLTILRELV…LSVPSRAYDN (179 aa). Residues 439–466 are a coiled coil; the sequence is SKETKERLQHEQQELLKLEQEAIELYKK. 4 disordered regions span residues 465–592, 684–703, 728–750, and 923–1010; these read KKQQ…SHSK, SLRD…QQGY, SGAN…NFTR, and RYET…EDRP. Composition is skewed to low complexity over residues 466–490 and 505–517; these read KQQS…VKSS and AQVK…KVVS. Positions 578-592 are enriched in basic and acidic residues; that stretch reads KEVRKEVPPSASHSK. Basic and acidic residues predominate over residues 923–935; it reads RYETKTRDYDRGT. Polar residues predominate over residues 936–948; it reads SYDSTVERSQYGI. Composition is skewed to basic and acidic residues over residues 950 to 962 and 972 to 986; these read SRRD…KVEA and TESR…RAES. A compositionally biased stretch (low complexity) spans 987–996; sequence RASYSVAESR. Ig-like C2-type domains follow at residues 1017-1103, 1152-1298, 1313-1400, 1504-1594, 1599-1689, 1694-1785, 1815-1906, 2018-2107, 2113-2214, 2220-2305, 2318-2409, 2415-2505, 2519-2609, 2614-2698, and 2716-2792; these read PVVV…TTVS, PRVK…AELS, PTLV…SSIN, PVIV…TQLL, PEFT…CVVT, PKVK…CKVA, PEIV…LSLS, PEIS…FNLA, PTFI…FKLA, PSFV…EKVA, PKFL…VEIV, PVFV…AKLY, PQFV…ANVR, PPVF…KDIT, and PPVF…SCRI. C1199 and C1282 form a disulfide bridge. C2739 and C2790 are disulfide-bonded. One can recognise a Fibronectin type-III 1 domain in the interval 2832-2933; sequence APPPLSEGPI…TYRQKLVPDP (102 aa). In terms of domain architecture, Protein kinase 1 spans 3186 to 3440; that stretch reads YDIGDELGRG…VKTALKHPWF (255 aa). The ATP site is built by G3198, K3215, E3260, A3262, E3266, K3310, and D3326. The region spanning 3654–3738 is the Ig-like C2-type 16 domain; the sequence is PFFREKPQTI…ARNKVGQTVA (85 aa). The 94-residue stretch at 3750 to 3843 folds into the Fibronectin type-III 2 domain; the sequence is APDSPEISAN…IPVSASTVGG (94 aa). Residues 3897 to 4151 enclose the Protein kinase 2 domain; that stretch reads YSFISEIARG…TEDCLEHRWL (255 aa).

The protein belongs to the protein kinase superfamily. CAMK Ser/Thr protein kinase family. As to quaternary structure, interacts with myosin. May interact (via protein kinase domain 1) with ball. May interact (via protein kinase domain 1 or 2) with mask. May interact (via protein kinase domain 2) with Tm1/tropomyosin-1. In terms of tissue distribution, expressed in the thoracic muscles including the indirect flight muscles (IFM) (at protein level).

The protein resides in the cytoplasm. It localises to the myofibril. The protein localises to the sarcomere. It is found in the m line. Structural component of the muscle M line which is involved in assembly and organization of sarcomere. Required for the development and organization of indirect flight muscle sarcomeres by regulating the formation of M line and H zone and the correct assembly of thick and thin filaments in the sarcomere. Lacks serine/threonine-protein kinase activity. The sequence is that of Protein Obscurin from Drosophila melanogaster (Fruit fly).